The primary structure comprises 547 residues: CTP synthase (547 aa).

The segment at 1 to 267 is amidoligase domain; it reads MTKFVFVTGG…AQQTLALLNL (267 aa). Residue Ser13 participates in CTP binding. Position 13 (Ser13) interacts with UTP. ATP contacts are provided by residues 14 to 19 and Asp71; that span reads SIGKGI. Mg(2+) contacts are provided by Asp71 and Glu141. Residues 148–150, 188–193, and Lys224 each bind CTP; these read DIE and KTKPTQ. UTP contacts are provided by residues 188–193 and Lys224; that span reads KTKPTQ. In terms of domain architecture, Glutamine amidotransferase type-1 spans 292–534; it reads EIALVGKYVQ…VKAAVDHYST (243 aa). An L-glutamine-binding site is contributed by Gly354. Catalysis depends on Cys381, which acts as the Nucleophile; for glutamine hydrolysis. Residues 382–385, Glu405, and Arg462 contribute to the L-glutamine site; that span reads LGMQ. Catalysis depends on residues His507 and Glu509.

The protein belongs to the CTP synthase family. In terms of assembly, homotetramer.

The enzyme catalyses UTP + L-glutamine + ATP + H2O = CTP + L-glutamate + ADP + phosphate + 2 H(+). It carries out the reaction L-glutamine + H2O = L-glutamate + NH4(+). It catalyses the reaction UTP + NH4(+) + ATP = CTP + ADP + phosphate + 2 H(+). It functions in the pathway pyrimidine metabolism; CTP biosynthesis via de novo pathway; CTP from UDP: step 2/2. Its activity is regulated as follows. Allosterically activated by GTP, when glutamine is the substrate; GTP has no effect on the reaction when ammonia is the substrate. The allosteric effector GTP functions by stabilizing the protein conformation that binds the tetrahedral intermediate(s) formed during glutamine hydrolysis. Inhibited by the product CTP, via allosteric rather than competitive inhibition. Its function is as follows. Catalyzes the ATP-dependent amination of UTP to CTP with either L-glutamine or ammonia as the source of nitrogen. Regulates intracellular CTP levels through interactions with the four ribonucleotide triphosphates. The protein is CTP synthase of Rippkaea orientalis (strain PCC 8801 / RF-1) (Cyanothece sp. (strain PCC 8801)).